Consider the following 113-residue polypeptide: Iron-sulfur cluster insertion protein ErpA (113 aa).

Iron-sulfur cluster contacts are provided by Cys41, Cys105, and Cys107.

This sequence belongs to the HesB/IscA family. As to quaternary structure, homodimer. Iron-sulfur cluster is required as a cofactor.

Functionally, required for insertion of 4Fe-4S clusters for at least IspG. This is Iron-sulfur cluster insertion protein ErpA from Vibrio parahaemolyticus serotype O3:K6 (strain RIMD 2210633).